The chain runs to 381 residues: Protein COS1 (381 aa).

Residues 1–42 lie on the Cytoplasmic side of the membrane; it reads MKENELKNEKSVDVLSFKQLESQKIVLPQDLFRSSFTWFCYE. Residues 43–63 traverse the membrane as a helical segment; sequence IYKSLAFRIWMLLWLPLSVWW. Residues 64 to 72 are Extracellular-facing; it reads KLSNNCIYP. The helical transmembrane segment at 73–93 threads the bilayer; that stretch reads LIVSLLVLFLGPIFVLVICGL. Residues 94–231 are Cytoplasmic-facing; sequence SRKRSLSKQL…YRFKLTWFLK (138 aa). Residues 232–252 traverse the membrane as a helical segment; the sequence is RISNIFMLIPFLNFLCCIYVS. The Extracellular segment spans residues 253–254; sequence RG. Residues 255-275 form a helical membrane-spanning segment; the sequence is MCLLLRTFYLGWILFMLVQGF. The Cytoplasmic portion of the chain corresponds to 276-381; the sequence is QNMRMIVLSV…QLSCSEESLA (106 aa).

This sequence belongs to the DUP/COS family.

It localises to the membrane. This chain is Protein COS1 (COS1), found in Saccharomyces cerevisiae (strain ATCC 204508 / S288c) (Baker's yeast).